Consider the following 460-residue polypeptide: Cysteine--tRNA ligase (460 aa).

Residue Cys29 coordinates Zn(2+). The short motif at 31 to 41 is the 'HIGH' region element; that stretch reads MTVYDYMHIGH. The Zn(2+) site is built by Cys210, His235, and Glu239. The short motif at 267–271 is the 'KMSKS' region element; the sequence is KMSKS. Lys270 is a binding site for ATP.

It belongs to the class-I aminoacyl-tRNA synthetase family. In terms of assembly, monomer. It depends on Zn(2+) as a cofactor.

It localises to the cytoplasm. The catalysed reaction is tRNA(Cys) + L-cysteine + ATP = L-cysteinyl-tRNA(Cys) + AMP + diphosphate. The protein is Cysteine--tRNA ligase of Coxiella burnetii (strain RSA 493 / Nine Mile phase I).